The sequence spans 66 residues: Large ribosomal subunit protein bL35 (66 aa).

Residues 1 to 23 form a disordered region; it reads MPKMKTHRASAKRFKRTANGGLK.

This sequence belongs to the bacterial ribosomal protein bL35 family.

The chain is Large ribosomal subunit protein bL35 from Lactobacillus helveticus (strain DPC 4571).